Reading from the N-terminus, the 468-residue chain is Dimethylamine methyltransferase MtbB2 (468 aa).

Residue Pyl356 is a non-standard amino acid, pyrrolysine.

This sequence belongs to the dimethylamine methyltransferase family.

It catalyses the reaction Co(I)-[dimethylamine-specific corrinoid protein] + dimethylamine + H(+) = methyl-Co(III)-[dimethylamine-specific corrinoid protein] + methylamine. The protein operates within one-carbon metabolism; methanogenesis from dimethylamine. Functionally, catalyzes the transfer of a methyl group from dimethylamine to the corrinoid cofactor of MtbC. The chain is Dimethylamine methyltransferase MtbB2 (mtbB2) from Methanosarcina acetivorans (strain ATCC 35395 / DSM 2834 / JCM 12185 / C2A).